We begin with the raw amino-acid sequence, 78 residues long: Large ribosomal subunit protein bL28 (78 aa).

This sequence belongs to the bacterial ribosomal protein bL28 family.

This chain is Large ribosomal subunit protein bL28, found in Nostoc sp. (strain PCC 7120 / SAG 25.82 / UTEX 2576).